Reading from the N-terminus, the 546-residue chain is Chaperonin GroEL (546 aa).

ATP-binding positions include 29–32, lysine 50, 86–90, glycine 414, and aspartate 492; these read TMGP and DGTTT.

It belongs to the chaperonin (HSP60) family. As to quaternary structure, forms a cylinder of 14 subunits composed of two heptameric rings stacked back-to-back. Interacts with the co-chaperonin GroES.

The protein localises to the cytoplasm. It carries out the reaction ATP + H2O + a folded polypeptide = ADP + phosphate + an unfolded polypeptide.. Functionally, together with its co-chaperonin GroES, plays an essential role in assisting protein folding. The GroEL-GroES system forms a nano-cage that allows encapsulation of the non-native substrate proteins and provides a physical environment optimized to promote and accelerate protein folding. In Helicobacter pylori (strain HPAG1), this protein is Chaperonin GroEL.